The following is a 380-amino-acid chain: Cytochrome b (380 aa).

Helical transmembrane passes span 33–53, 77–98, 113–133, and 178–198; these read FGSL…FLAM, WLIR…YLHI, WNIG…GYVL, and FFAF…LHLL. Heme b-binding residues include H83 and H97. Residues H182 and H196 each coordinate heme b. H201 is an a ubiquinone binding site. Transmembrane regions (helical) follow at residues 226-246, 288-308, 320-340, and 347-367; these read YKDL…ALFT, LGGV…PILH, VTQF…WIGG, and YIII…LIMP.

It belongs to the cytochrome b family. As to quaternary structure, the cytochrome bc1 complex contains 3 respiratory subunits (MT-CYB, CYC1 and UQCRFS1), 2 core proteins (UQCRC1 and UQCRC2) and probably 6 low-molecular weight proteins. Requires heme b as cofactor.

It is found in the mitochondrion inner membrane. In terms of biological role, component of the ubiquinol-cytochrome c reductase complex (complex III or cytochrome b-c1 complex) that is part of the mitochondrial respiratory chain. The b-c1 complex mediates electron transfer from ubiquinol to cytochrome c. Contributes to the generation of a proton gradient across the mitochondrial membrane that is then used for ATP synthesis. In Pagrus major (Red sea bream), this protein is Cytochrome b (mt-cyb).